The primary structure comprises 376 residues: Putative type I restriction enzyme MpnIIP endonuclease subunit N-terminal part (376 aa).

Its function is as follows. The N-terminal section of a putative type I restriction enzyme that if reconstituted might recognize 5'-GAN(7)TAY-3' and cleave a random distance away. Subunit R is required for both nuclease and ATPase activities, but not for modification. In Mycoplasma pneumoniae (strain ATCC 29342 / M129 / Subtype 1) (Mycoplasmoides pneumoniae), this protein is Putative type I restriction enzyme MpnIIP endonuclease subunit N-terminal part.